We begin with the raw amino-acid sequence, 292 residues long: 33 kDa chaperonin (292 aa).

Cystine bridges form between Cys230-Cys232 and Cys263-Cys266.

It belongs to the HSP33 family. Under oxidizing conditions two disulfide bonds are formed involving the reactive cysteines. Under reducing conditions zinc is bound to the reactive cysteines and the protein is inactive.

Its subcellular location is the cytoplasm. Its function is as follows. Redox regulated molecular chaperone. Protects both thermally unfolding and oxidatively damaged proteins from irreversible aggregation. Plays an important role in the bacterial defense system toward oxidative stress. The polypeptide is 33 kDa chaperonin (Salmonella typhi).